A 128-amino-acid chain; its full sequence is Otoraplin (128 aa).

Positions 1–17 (MARILLLFLPGLVAVCA) are cleaved as a signal peptide. Cystine bridges form between C32-C37 and C55-C127. Positions 39 to 110 (YTISLASAQE…PRNLVKEQRV (72 aa)) constitute an SH3 domain.

This sequence belongs to the MIA/OTOR family. In terms of tissue distribution, highly expressed in cochlea.

It is found in the secreted. The sequence is that of Otoraplin (OTOR) from Homo sapiens (Human).